The sequence spans 142 residues: Large ribosomal subunit protein uL11 (142 aa).

Position 2 is a n,N,N-trimethylalanine (Ala-2). Residues Lys-4 and Lys-40 each carry the N6,N6,N6-trimethyllysine modification.

It belongs to the universal ribosomal protein uL11 family. Part of the ribosomal stalk of the 50S ribosomal subunit. Interacts with L10 and the large rRNA to form the base of the stalk. L10 forms an elongated spine to which L12 dimers bind in a sequential fashion forming a multimeric L10(L12)X complex. One or more lysine residues are methylated.

Its function is as follows. Forms part of the ribosomal stalk which helps the ribosome interact with GTP-bound translation factors. The polypeptide is Large ribosomal subunit protein uL11 (Shigella flexneri).